A 620-amino-acid chain; its full sequence is uncharacterized protein (620 aa).

This sequence belongs to the chlamydial CPn_0512/CT_425/TC_0708 family.

This is an uncharacterized protein from Chlamydia pneumoniae (Chlamydophila pneumoniae).